The following is a 394-amino-acid chain: MLEQQTCAEKAANTVNTVELSTDQAKKINLMNLTRQQMREFFKELGEKPFRADQLVKWIYHFGEDNFDNMTNINKKLRDKLKQVAEIKAPEVAVEQRSADGTIKWAMQVGDQQVETVYIPEADRATLCVSSQVGCALACTFCSTAQQGFNRNLTVSEIIGQVWRASKIIGNFGVTGVRPITNVVMMGMGEPLLNVANVVPAMEIMLDDFAYGLSKRRVTLSTSGVVPALDKLSEMIDVALAISLHAPNDELRDEIVPINKKYNIKMLMDSVNRYLSVSNANHGKVTIEYVMLDHVNDGVEHAHQLAQVLKNTPCKINLIPWNPFPEAPYAKSSNSRIDRFQKTLMEYGFTVIVRKTRGDDIDAACGQLAGDVIDRTKRTAQKKQFGQEIAVRNH.

Glu115 functions as the Proton acceptor in the catalytic mechanism. The 240-residue stretch at Glu121 to Asp360 folds into the Radical SAM core domain. A disulfide bond links Cys128 and Cys365. [4Fe-4S] cluster contacts are provided by Cys135, Cys139, and Cys142. Residues Gly189–Glu190, Ser221, Ser243–His245, and Asn322 each bind S-adenosyl-L-methionine. The active-site S-methylcysteine intermediate is Cys365.

It belongs to the radical SAM superfamily. RlmN family. [4Fe-4S] cluster serves as cofactor.

The protein localises to the cytoplasm. The catalysed reaction is adenosine(2503) in 23S rRNA + 2 reduced [2Fe-2S]-[ferredoxin] + 2 S-adenosyl-L-methionine = 2-methyladenosine(2503) in 23S rRNA + 5'-deoxyadenosine + L-methionine + 2 oxidized [2Fe-2S]-[ferredoxin] + S-adenosyl-L-homocysteine. The enzyme catalyses adenosine(37) in tRNA + 2 reduced [2Fe-2S]-[ferredoxin] + 2 S-adenosyl-L-methionine = 2-methyladenosine(37) in tRNA + 5'-deoxyadenosine + L-methionine + 2 oxidized [2Fe-2S]-[ferredoxin] + S-adenosyl-L-homocysteine. Its function is as follows. Specifically methylates position 2 of adenine 2503 in 23S rRNA and position 2 of adenine 37 in tRNAs. m2A2503 modification seems to play a crucial role in the proofreading step occurring at the peptidyl transferase center and thus would serve to optimize ribosomal fidelity. This is Dual-specificity RNA methyltransferase RlmN from Pasteurella multocida (strain Pm70).